A 181-amino-acid chain; its full sequence is Large ribosomal subunit protein uL6 (181 aa).

It belongs to the universal ribosomal protein uL6 family. Part of the 50S ribosomal subunit.

In terms of biological role, this protein binds to the 23S rRNA, and is important in its secondary structure. It is located near the subunit interface in the base of the L7/L12 stalk, and near the tRNA binding site of the peptidyltransferase center. The chain is Large ribosomal subunit protein uL6 from Synechococcus sp. (strain CC9605).